The primary structure comprises 87 residues: Small ribosomal subunit protein bS20 (87 aa).

A disordered region spans residues 1–20 (MANSAQARKRARTALKQRAH). Over residues 7–19 (ARKRARTALKQRA) the composition is skewed to basic residues.

It belongs to the bacterial ribosomal protein bS20 family.

Its function is as follows. Binds directly to 16S ribosomal RNA. The sequence is that of Small ribosomal subunit protein bS20 from Chromobacterium violaceum (strain ATCC 12472 / DSM 30191 / JCM 1249 / CCUG 213 / NBRC 12614 / NCIMB 9131 / NCTC 9757 / MK).